The sequence spans 305 residues: Dermonecrotic toxin LiSicTox-alphaIA2aiii (305 aa).

The N-terminal stretch at L1–A17 is a signal peptide. A propeptide spanning residues A18–R25 is cleaved from the precursor. Residue H37 is part of the active site. 2 residues coordinate Mg(2+): E57 and D59. The Nucleophile role is filled by H73. Cystine bridges form between C77–C83 and C79–C222. D117 lines the Mg(2+) pocket. The N-linked (GlcNAc...) asparagine glycan is linked to N282.

Belongs to the arthropod phospholipase D family. Class II subfamily. The cofactor is Mg(2+). As to expression, expressed by the venom gland.

It localises to the secreted. It carries out the reaction an N-(acyl)-sphingosylphosphocholine = an N-(acyl)-sphingosyl-1,3-cyclic phosphate + choline. It catalyses the reaction an N-(acyl)-sphingosylphosphoethanolamine = an N-(acyl)-sphingosyl-1,3-cyclic phosphate + ethanolamine. The catalysed reaction is a 1-acyl-sn-glycero-3-phosphocholine = a 1-acyl-sn-glycero-2,3-cyclic phosphate + choline. The enzyme catalyses a 1-acyl-sn-glycero-3-phosphoethanolamine = a 1-acyl-sn-glycero-2,3-cyclic phosphate + ethanolamine. Its function is as follows. Dermonecrotic toxins cleave the phosphodiester linkage between the phosphate and headgroup of certain phospholipids (sphingolipid and lysolipid substrates), forming an alcohol (often choline) and a cyclic phosphate. This toxin acts on sphingomyelin (SM). It may also act on ceramide phosphoethanolamine (CPE), lysophosphatidylcholine (LPC) and lysophosphatidylethanolamine (LPE), but not on lysophosphatidylserine (LPS), and lysophosphatidylglycerol (LPG). It acts by transphosphatidylation, releasing exclusively cyclic phosphate products as second products. Induces dermonecrosis, hemolysis, increased vascular permeability, edema, inflammatory response, and platelet aggregation. The chain is Dermonecrotic toxin LiSicTox-alphaIA2aiii from Loxosceles intermedia (Brown spider).